The chain runs to 417 residues: 26S proteasome regulatory subunit RPN14 (417 aa).

WD repeat units follow at residues 134–173 (AHVSEITKLKFFPSGEALISSSQDMQLKIWSVKDGSNPRT), 176–215 (GHRATVTDIAIIDRGRNVLSASLDGTIRLWECGTGTTIHT), 242–281 (ISTSKKNNLEFGTYGKYVIAGHVSGVITVHNVFSKEQTIQ), 285–325 (KFTC…CPVG), 330–371 (NEGT…PAIE), and 380–416 (SNDDEVSQFCYVSDDESNGEVLEVGKNNFCALYNLSN).

It belongs to the WD repeat PAAF1/RPN14 family. In terms of assembly, associates with the 19S proteasome regulatory particle (RP). Interacts directly with RPT5 and RPT6.

It is found in the cytoplasm. Its subcellular location is the nucleus. Its function is as follows. Acts as a regulatory subunit of the 26 proteasome which is involved in the ATP-dependent degradation of ubiquitinated proteins. Is not a genuine component of the 26S proteasome, but an auxiliary factor that interacts with the proteasomal ATPase of 19S regulatory particle (RP). Acts as a chaperone which regulates the highly structured assembly of the 19S regulatory particle. Involved in the substrate specificity of the 26S proteasome and is especially involved in the degradation of ubiquitinated GCN4. May contribute to the stability of the 26S proteasome in some stress conditions. The chain is 26S proteasome regulatory subunit RPN14 (RPN14) from Saccharomyces cerevisiae (strain ATCC 204508 / S288c) (Baker's yeast).